The chain runs to 302 residues: Acetylglutamate kinase (302 aa).

Residues 68–69 (GG), arginine 90, and asparagine 195 each bind substrate.

This sequence belongs to the acetylglutamate kinase family. ArgB subfamily.

The protein resides in the cytoplasm. It catalyses the reaction N-acetyl-L-glutamate + ATP = N-acetyl-L-glutamyl 5-phosphate + ADP. Its pathway is amino-acid biosynthesis; L-arginine biosynthesis; N(2)-acetyl-L-ornithine from L-glutamate: step 2/4. In terms of biological role, catalyzes the ATP-dependent phosphorylation of N-acetyl-L-glutamate. The chain is Acetylglutamate kinase from Marinomonas sp. (strain MWYL1).